A 286-amino-acid chain; its full sequence is Putative inorganic pyrophosphatase C3A12.02 (286 aa).

Arg-85 lines the diphosphate pocket. Mg(2+) contacts are provided by Asp-122, Asp-127, and Asp-159.

It belongs to the PPase family. The cofactor is Mg(2+).

Its subcellular location is the cytoplasm. It carries out the reaction diphosphate + H2O = 2 phosphate + H(+). The chain is Putative inorganic pyrophosphatase C3A12.02 from Schizosaccharomyces pombe (strain 972 / ATCC 24843) (Fission yeast).